The sequence spans 103 residues: Large ribosomal subunit protein bL21 (103 aa).

This sequence belongs to the bacterial ribosomal protein bL21 family. In terms of assembly, part of the 50S ribosomal subunit. Contacts protein L20.

Functionally, this protein binds to 23S rRNA in the presence of protein L20. In Paraburkholderia phytofirmans (strain DSM 17436 / LMG 22146 / PsJN) (Burkholderia phytofirmans), this protein is Large ribosomal subunit protein bL21.